We begin with the raw amino-acid sequence, 342 residues long: Holliday junction branch migration complex subunit RuvB (342 aa).

Residues 1–185 (MREDYLKSDD…FGINARLEYY (185 aa)) are large ATPase domain (RuvB-L). ATP is bound by residues leucine 24, arginine 25, glycine 66, lysine 69, threonine 70, threonine 71, 132–134 (EDY), arginine 175, tyrosine 185, and arginine 222. Threonine 70 provides a ligand contact to Mg(2+). The interval 186–256 (DAKLLTRIVQ…IARIALQALN (71 aa)) is small ATPAse domain (RuvB-S). A head domain (RuvB-H) region spans residues 259–342 (HNGLDDMDNR…PPAQSGTLFE (84 aa)). Positions 314 and 319 each coordinate DNA.

The protein belongs to the RuvB family. Homohexamer. Forms an RuvA(8)-RuvB(12)-Holliday junction (HJ) complex. HJ DNA is sandwiched between 2 RuvA tetramers; dsDNA enters through RuvA and exits via RuvB. An RuvB hexamer assembles on each DNA strand where it exits the tetramer. Each RuvB hexamer is contacted by two RuvA subunits (via domain III) on 2 adjacent RuvB subunits; this complex drives branch migration. In the full resolvosome a probable DNA-RuvA(4)-RuvB(12)-RuvC(2) complex forms which resolves the HJ.

The protein localises to the cytoplasm. It carries out the reaction ATP + H2O = ADP + phosphate + H(+). Its function is as follows. The RuvA-RuvB-RuvC complex processes Holliday junction (HJ) DNA during genetic recombination and DNA repair, while the RuvA-RuvB complex plays an important role in the rescue of blocked DNA replication forks via replication fork reversal (RFR). RuvA specifically binds to HJ cruciform DNA, conferring on it an open structure. The RuvB hexamer acts as an ATP-dependent pump, pulling dsDNA into and through the RuvAB complex. RuvB forms 2 homohexamers on either side of HJ DNA bound by 1 or 2 RuvA tetramers; 4 subunits per hexamer contact DNA at a time. Coordinated motions by a converter formed by DNA-disengaged RuvB subunits stimulates ATP hydrolysis and nucleotide exchange. Immobilization of the converter enables RuvB to convert the ATP-contained energy into a lever motion, pulling 2 nucleotides of DNA out of the RuvA tetramer per ATP hydrolyzed, thus driving DNA branch migration. The RuvB motors rotate together with the DNA substrate, which together with the progressing nucleotide cycle form the mechanistic basis for DNA recombination by continuous HJ branch migration. Branch migration allows RuvC to scan DNA until it finds its consensus sequence, where it cleaves and resolves cruciform DNA. The chain is Holliday junction branch migration complex subunit RuvB from Cytophaga hutchinsonii (strain ATCC 33406 / DSM 1761 / CIP 103989 / NBRC 15051 / NCIMB 9469 / D465).